Consider the following 707-residue polypeptide: MGEVVFSTWGGKVVDHRGGPSGGGPSWAGEFGGRQLKAFIGWDGLVVTDPAVDLLAALQAYYQAVQGESCGRCVPCRVGTRVIYNVLVRIAGGEGLPSDLDLLRRVAWIVRDGSLCELGQAGAKAVLDFLDYYSEALRPFLEDSGRVAGGQRRPGPGGRVQVLASGRVLVGNDRGKGAAAASPAAGLTYKPFVTAPCLKRCPAHLDIPAYIDAIKDGRYEESLAIIRQRTALAGVLGRVCVHPCEENCRRGNVDEPLAIRGLKRFVADYEVKRGRRPVAVCGGNLFTGPWRPAGQAGGEETTAVTSGKKVAIIGAGPAGLSAAYQLAGRGYKVTIFEALPVAGGMLAVGIPSYRLPRDILAGEIEAIKALGVTINLNTRVGVDVTMDQLQRDYDAVFIATGLHASSRMGVAGEDEGYGGFIPGVKFLRDLNLDRCPSLEGKVVAVVGGGNVAMDCARSALRRGAREVHLIYRRSRAEMPAHATEVRDAEAEGVIYHFLVNPTALVAEKGNIKGMQCVRMKLGEPDDSGRRRPVPVPGTEFFLPCDIVVPAIGQAADLSFLDGRIEVGKRGTISVDPVTLATSVPGVFAGGDIVLGARTVVEAVAQGNRAAVSIDQYLRQGTTSPTVEDELDAWLEKVGVYDPEEDVGIYGGRPRQAERVAPLAERVKDFREVEGGFDFYAGRAEAERCLRCYRVGMMVLAGEGESNG.

Heterotetramer composed of two alpha (FdhA) and two beta (FdhB) subunits.

It is found in the cytoplasm. The enzyme catalyses formate + NADP(+) = CO2 + NADPH. Activity is very sensitive to oxygen. The activity in growing cells is enhanced when selenite and molybdate are added together to the growth medium. Tungstate replaces and is better than molybdate. Selenite is incorporated into the enzyme. Requires a sulfhydryl compound for activity. Inhibited by cyanide, EDTA, hypophosphite and mercaptoethanol. Sulfite inhibits the activity with NADP but not with methyl viologen as electron acceptor. In terms of biological role, component of a dehydrogenase that catalyzes the NADP-dependent reduction of CO(2) to formate, the first step in the synthesis of the methyl group of acetate during synthesis of acetate from CO(2). In vitro, can use methyl viologen and benzyl viologen in addition to its natural electron acceptor. The chain is NADP(+)-dependent formate dehydrogenase subunit beta from Moorella thermoacetica (Clostridium thermoaceticum).